A 181-amino-acid chain; its full sequence is BURP domain-containing protein 7 (181 aa).

The signal sequence occupies residues methionine 1–alanine 21. Positions phenylalanine 65–proline 181 constitute a BURP domain. The interval glutamine 112–proline 181 is disordered. Residues arginine 128–serine 143 show a composition bias toward basic residues. A compositionally biased stretch (low complexity) spans serine 144–alanine 157. Basic residues predominate over residues glycine 170 to proline 181.

In terms of tissue distribution, expressed in roots, stems, leaves and shoot.

In Oryza sativa subsp. japonica (Rice), this protein is BURP domain-containing protein 7 (BURP7).